The sequence spans 71 residues: Large ribosomal subunit protein uL29 (71 aa).

This sequence belongs to the universal ribosomal protein uL29 family.

The sequence is that of Large ribosomal subunit protein uL29 from Rickettsia canadensis (strain McKiel).